The sequence spans 1493 residues: Myosin-13 (1493 aa).

The Myosin N-terminal SH3-like domain maps to 18–67 (KVGSIVWVQDPEEAWIDGEVVEVNGEDIKVQCTSGKTVVAKGSNTYPKDM). A Myosin motor domain is found at 72–741 (SGVDDMTTLA…QMAELDDRRT (670 aa)). Residues 166–173 (GESGAGKT) and 219–227 (NNNSSRFGK) each bind ATP. 4 actin-binding regions span residues 504–538 (LIEK…YETL), 540–563 (DNKY…AGDV), 598–622 (FPPL…KQQL), and 622–644 (LASL…KPNN). IQ domains are found at residues 744–773 (LGRA…AAIN), 767–796 (LRNA…EAAA), 792–821 (REAA…VTVQ), 813–842 (YIEA…ATTV), 836–865 (KTKA…AAIT), and 859–888 (LKKA…DARD). Residues 889 to 1057 (TVVLQAAKSM…NFLKESVLTT (169 aa)) adopt a coiled-coil conformation. Positions 1085–1114 (QLSGAEFTTPPRIQESGSDTKSRGSHIDPQ) are disordered. Basic and acidic residues predominate over residues 1102–1114 (SDTKSRGSHIDPQ). Residues 1161–1444 (DRLVQMIGSA…IASMTGVMTD (284 aa)) enclose the Dilute domain.

The protein belongs to the TRAFAC class myosin-kinesin ATPase superfamily. Myosin family. Plant myosin class XI subfamily. In terms of assembly, homodimer.

Myosin heavy chain that is required for the cell cycle-regulated transport of various organelles and proteins for their segregation. Functions by binding with its tail domain to receptor proteins on organelles and exerting force with its N-terminal motor domain against actin filaments, thereby transporting its cargo along polarized actin cables. The sequence is that of Myosin-13 (XI-G) from Arabidopsis thaliana (Mouse-ear cress).